Here is a 755-residue protein sequence, read N- to C-terminus: Transcription factor kayak, isoforms A/B/F (755 aa).

2 stretches are compositionally biased toward low complexity: residues 23-66 (FAQQ…LPTQ) and 149-159 (QQHYPSESQSS). 4 disordered regions span residues 23 to 75 (FAQQ…SQSV), 149 to 168 (QQHY…PETP), 316 to 350 (LGQG…HTDS), and 383 to 440 (GSAS…KRRV). The segment covering 316–333 (LGQGSESEDSNASYNDTQ) has biased composition (polar residues). Composition is skewed to low complexity over residues 341–350 (TDTSSAHTDS) and 383–397 (GSAS…TSNT). The 64-residue stretch at 418–481 (EQKRAVRRER…NQLEYLLATH (64 aa)) folds into the bZIP domain. The tract at residues 420-439 (KRAVRRERNKQAAARCRKRR) is basic motif. Residues 446–453 (LTEEVEQL) form a leucine-zipper region. Over residues 510 to 531 (AGSSGSGASSHHNHNSNDSSNG) the composition is skewed to low complexity. 2 disordered regions span residues 510 to 552 (AGSS…PLDL) and 716 to 755 (DGGT…LVSL). The segment covering 539–549 (TLNSTGRSNSP) has biased composition (polar residues). A Phosphoserine modification is found at serine 548.

This sequence belongs to the bZIP family. Fos subfamily. Homodimer. Heterodimer with Jra. The kay-Jra heterodimer binds more stably to the AP-1 site than either of the two proteins alone. Early expression in the embryo is mesodermal and some of this expression is localized to a region surrounding the cephalic furrow. Later in embryonic development expression is ectodermal, corresponding to muscle attachment sites. Also observed in part of the mid- and hindgut and in the anal pad.

It is found in the nucleus. Functionally, developmentally regulated transcription factor AP-1 binds and recognizes the enhancer DNA sequence: 5'-TGA[CG]TCA-3'. May play a role in the function or determination of a particular subset of cells in the developing embryo. It is able to carry out its function either independently of or in conjunction with Jra. The sequence is that of Transcription factor kayak, isoforms A/B/F (kay) from Drosophila melanogaster (Fruit fly).